Consider the following 564-residue polypeptide: Dihydroxy-acid dehydratase (564 aa).

Asp80 contacts Mg(2+). Cys121 is a binding site for [2Fe-2S] cluster. Mg(2+) contacts are provided by Asp122 and Lys123. Lys123 bears the N6-carboxylysine mark. Position 194 (Cys194) interacts with [2Fe-2S] cluster. Residue Glu447 participates in Mg(2+) binding. Ser473 functions as the Proton acceptor in the catalytic mechanism.

It belongs to the IlvD/Edd family. As to quaternary structure, homodimer. The cofactor is [2Fe-2S] cluster. Mg(2+) is required as a cofactor.

It carries out the reaction (2R)-2,3-dihydroxy-3-methylbutanoate = 3-methyl-2-oxobutanoate + H2O. It catalyses the reaction (2R,3R)-2,3-dihydroxy-3-methylpentanoate = (S)-3-methyl-2-oxopentanoate + H2O. It functions in the pathway amino-acid biosynthesis; L-isoleucine biosynthesis; L-isoleucine from 2-oxobutanoate: step 3/4. Its pathway is amino-acid biosynthesis; L-valine biosynthesis; L-valine from pyruvate: step 3/4. Functionally, functions in the biosynthesis of branched-chain amino acids. Catalyzes the dehydration of (2R,3R)-2,3-dihydroxy-3-methylpentanoate (2,3-dihydroxy-3-methylvalerate) into 2-oxo-3-methylpentanoate (2-oxo-3-methylvalerate) and of (2R)-2,3-dihydroxy-3-methylbutanoate (2,3-dihydroxyisovalerate) into 2-oxo-3-methylbutanoate (2-oxoisovalerate), the penultimate precursor to L-isoleucine and L-valine, respectively. This Listeria monocytogenes serotype 4b (strain CLIP80459) protein is Dihydroxy-acid dehydratase.